Consider the following 620-residue polypeptide: 1-deoxy-D-xylulose-5-phosphate synthase (620 aa).

Thiamine diphosphate contacts are provided by residues histidine 80 and 121–123; that span reads GHS. Mg(2+) is bound at residue aspartate 152. Thiamine diphosphate-binding positions include 153-154, asparagine 181, tyrosine 288, and glutamate 370; that span reads GA. Residue asparagine 181 participates in Mg(2+) binding.

It belongs to the transketolase family. DXPS subfamily. As to quaternary structure, homodimer. Mg(2+) serves as cofactor. Requires thiamine diphosphate as cofactor.

It carries out the reaction D-glyceraldehyde 3-phosphate + pyruvate + H(+) = 1-deoxy-D-xylulose 5-phosphate + CO2. Its pathway is metabolic intermediate biosynthesis; 1-deoxy-D-xylulose 5-phosphate biosynthesis; 1-deoxy-D-xylulose 5-phosphate from D-glyceraldehyde 3-phosphate and pyruvate: step 1/1. Functionally, catalyzes the acyloin condensation reaction between C atoms 2 and 3 of pyruvate and glyceraldehyde 3-phosphate to yield 1-deoxy-D-xylulose-5-phosphate (DXP). This chain is 1-deoxy-D-xylulose-5-phosphate synthase, found in Salmonella paratyphi A (strain ATCC 9150 / SARB42).